Consider the following 370-residue polypeptide: GTPase Obg (370 aa).

In terms of domain architecture, Obg spans 1 to 159 (MKFIDEARIE…RMLKLELKVL (159 aa)). The interval 128 to 147 (LHFKSSTNRAPRQKTDGKPG) is disordered. In terms of domain architecture, OBG-type G spans 160–334 (ADVGLLGMPN…LCYAIYDYLS (175 aa)). GTP contacts are provided by residues 166–173 (GMPNAGKS), 191–195 (FTTLA), 213–216 (DIPG), 284–287 (NKLD), and 315–317 (SAL). Residues serine 173 and threonine 193 each contribute to the Mg(2+) site.

It belongs to the TRAFAC class OBG-HflX-like GTPase superfamily. OBG GTPase family. In terms of assembly, monomer. Requires Mg(2+) as cofactor.

It is found in the cytoplasm. In terms of biological role, an essential GTPase which binds GTP, GDP and possibly (p)ppGpp with moderate affinity, with high nucleotide exchange rates and a fairly low GTP hydrolysis rate. Plays a role in control of the cell cycle, stress response, ribosome biogenesis and in those bacteria that undergo differentiation, in morphogenesis control. The sequence is that of GTPase Obg from Burkholderia orbicola (strain MC0-3).